Reading from the N-terminus, the 454-residue chain is NADP-specific glutamate dehydrogenase 1 (454 aa).

Ser2 bears the N-acetylserine mark. Residue Lys110 is part of the active site. Residue 174–203 (GVLTGKGLNWGGSLIRPEATGYGLVYYTQA) participates in NAD(+) binding. Residues Lys325, Lys371, and Lys433 each participate in a glycyl lysine isopeptide (Lys-Gly) (interchain with G-Cter in ubiquitin) cross-link.

This sequence belongs to the Glu/Leu/Phe/Val dehydrogenases family. Homohexamer.

It carries out the reaction L-glutamate + NADP(+) + H2O = 2-oxoglutarate + NH4(+) + NADPH + H(+). Its function is as follows. Catalyzes the incorporation of an ammonium ion into alpha-ketoglutarate to form L-glutamate, the major route of assimilation of ammonia into an organic form in yeast. This Saccharomyces cerevisiae (strain ATCC 204508 / S288c) (Baker's yeast) protein is NADP-specific glutamate dehydrogenase 1.